The primary structure comprises 150 residues: Placenta-specific protein 4 (150 aa).

In terms of tissue distribution, expressed in placental syncytiotrophoblast and choriocarcinoma cells.

The sequence is that of Placenta-specific protein 4 (PLAC4) from Homo sapiens (Human).